The following is a 96-amino-acid chain: Large ribosomal subunit protein bL27 (96 aa).

A propeptide spanning residues 1 to 11 is cleaved from the precursor; it reads MLKTLENLQLF. The segment at 13–36 is disordered; the sequence is HKKGGGSTSNGRDSQAKRLGAKAA.

This sequence belongs to the bacterial ribosomal protein bL27 family. In terms of processing, the N-terminus is cleaved by ribosomal processing cysteine protease Prp.

The protein is Large ribosomal subunit protein bL27 of Streptococcus thermophilus (strain CNRZ 1066).